The chain runs to 151 residues: Ribosome maturation factor RimP (151 aa).

This sequence belongs to the RimP family.

It localises to the cytoplasm. Its function is as follows. Required for maturation of 30S ribosomal subunits. The sequence is that of Ribosome maturation factor RimP from Crocosphaera subtropica (strain ATCC 51142 / BH68) (Cyanothece sp. (strain ATCC 51142)).